Consider the following 338-residue polypeptide: Lipoate-protein ligase A (338 aa).

A BPL/LPL catalytic domain is found at 29–216 (PATQRVLFLW…AFFAHYGERV (188 aa)). ATP contacts are provided by residues R71, 76–79 (GAVF), and K134. Position 134 (K134) interacts with (R)-lipoate.

The protein belongs to the LplA family. In terms of assembly, monomer.

The protein resides in the cytoplasm. The catalysed reaction is L-lysyl-[lipoyl-carrier protein] + (R)-lipoate + ATP = N(6)-[(R)-lipoyl]-L-lysyl-[lipoyl-carrier protein] + AMP + diphosphate + H(+). It participates in protein modification; protein lipoylation via exogenous pathway; protein N(6)-(lipoyl)lysine from lipoate: step 1/2. It functions in the pathway protein modification; protein lipoylation via exogenous pathway; protein N(6)-(lipoyl)lysine from lipoate: step 2/2. Its function is as follows. Catalyzes both the ATP-dependent activation of exogenously supplied lipoate to lipoyl-AMP and the transfer of the activated lipoyl onto the lipoyl domains of lipoate-dependent enzymes. The chain is Lipoate-protein ligase A from Salmonella paratyphi B (strain ATCC BAA-1250 / SPB7).